Here is a 216-residue protein sequence, read N- to C-terminus: L-fuculose phosphate aldolase (216 aa).

Substrate-binding positions include 28-29 (GN), 43-44 (TG), and 71-72 (SS). The active-site Proton donor/acceptor is glutamate 73. Zn(2+) is bound by residues glutamate 73, histidine 92, histidine 94, and histidine 155.

This sequence belongs to the aldolase class II family. AraD/FucA subfamily. In terms of assembly, homotetramer. It depends on Zn(2+) as a cofactor.

It catalyses the reaction L-fuculose 1-phosphate = (S)-lactaldehyde + dihydroxyacetone phosphate. It functions in the pathway carbohydrate degradation; L-fucose degradation; L-lactaldehyde and glycerone phosphate from L-fucose: step 3/3. In terms of biological role, involved in the degradation of L-fucose and D-arabinose. Catalyzes the reversible cleavage of L-fuculose 1-phosphate (Fuc1P) to yield dihydroxyacetone phosphate (DHAP) and L-lactaldehyde. The protein is L-fuculose phosphate aldolase of Haemophilus influenzae (strain ATCC 51907 / DSM 11121 / KW20 / Rd).